The chain runs to 72 residues: uncharacterized protein (72 aa).

The signal sequence occupies residues 1 to 22 (MQSNFIFATLLVLLSLLTFTYA). Over 23–28 (SGSSSM) the chain is Extracellular. A helical transmembrane segment spans residues 29–49 (TSSSMPMFGGAIVAAFAFAIF). At 50 to 72 (SRLAQNFAPRAIFSLLPYHSVSC) the chain is on the cytoplasmic side.

It is found in the membrane. This is an uncharacterized protein from Dictyostelium discoideum (Social amoeba).